The following is a 267-amino-acid chain: MNSRVLFGSFVPVDSVLHRLDPRLKLVTCFWYVVIIFFAKGPLTYLLLVAMLGAMIGLSKVPLKMYWAGLKPLLWVIGLTIAIQVLFSSGGHVYWHWGLMAITSGGINQALVILARFILIVLASTVLTATTPPLRLADAIESLMKPLKKIKVPVNQIAMMISIALRFIPTIMDEVNTIVKAQQARGVDFTSGSVYTRVKRMVPIMVPLFVGAFRRAEDLAVAMEARGYDPDQERTRYRQLTWRRPDSIALAVVVIVSVLFFVARILL.

Transmembrane regions (helical) follow at residues 30–50 (FWYV…LLVA), 67–87 (WAGL…QVLF), 110–130 (ALVI…LTAT), 152–172 (VPVN…PTIM), and 247–267 (SIAL…RILL).

Belongs to the energy-coupling factor EcfT family. Forms a stable energy-coupling factor (ECF) transporter complex composed of 2 membrane-embedded substrate-binding proteins (S component), 2 ATP-binding proteins (A component) and 2 transmembrane proteins (T component). May be able to interact with more than 1 S component at a time.

It localises to the cell membrane. In terms of biological role, transmembrane (T) component of an energy-coupling factor (ECF) ABC-transporter complex. Unlike classic ABC transporters this ECF transporter provides the energy necessary to transport a number of different substrates. In Limosilactobacillus fermentum (strain CECT 5716 / Lc40) (Lactobacillus fermentum), this protein is Energy-coupling factor transporter transmembrane protein EcfT.